The chain runs to 424 residues: UDP-N-acetylglucosamine 1-carboxyvinyltransferase (424 aa).

A phosphoenolpyruvate-binding site is contributed by 22 to 23 (KN). Arg-93 contacts UDP-N-acetyl-alpha-D-glucosamine. Residue Cys-117 is the Proton donor of the active site. 2-(S-cysteinyl)pyruvic acid O-phosphothioketal is present on Cys-117. Residues 162–165 (KVSV), Asp-307, and Ile-329 each bind UDP-N-acetyl-alpha-D-glucosamine.

This sequence belongs to the EPSP synthase family. MurA subfamily.

The protein resides in the cytoplasm. It catalyses the reaction phosphoenolpyruvate + UDP-N-acetyl-alpha-D-glucosamine = UDP-N-acetyl-3-O-(1-carboxyvinyl)-alpha-D-glucosamine + phosphate. The protein operates within cell wall biogenesis; peptidoglycan biosynthesis. Cell wall formation. Adds enolpyruvyl to UDP-N-acetylglucosamine. This Glaesserella parasuis serovar 5 (strain SH0165) (Haemophilus parasuis) protein is UDP-N-acetylglucosamine 1-carboxyvinyltransferase.